The following is a 327-amino-acid chain: Cobalamin biosynthesis protein CobD (327 aa).

The next 4 helical transmembrane spans lie at 63 to 83 (VGILVLLAGATALGVVLARLF), 84 to 104 (DVLGALGSLLEVVTVAVFLAQ), 158 to 178 (FSDGVVAPAFWYAVAGLPGLL), and 305 to 325 (VFYAACSVMTFAFAAAALPLL).

It belongs to the CobD/CbiB family.

The protein localises to the cell membrane. It participates in cofactor biosynthesis; adenosylcobalamin biosynthesis. Converts cobyric acid to cobinamide by the addition of aminopropanol on the F carboxylic group. The chain is Cobalamin biosynthesis protein CobD from Rhizobium meliloti (strain 1021) (Ensifer meliloti).